Consider the following 123-residue polypeptide: Small ribosomal subunit protein uS12c (123 aa).

The protein belongs to the universal ribosomal protein uS12 family. As to quaternary structure, part of the 30S ribosomal subunit.

It localises to the plastid. It is found in the chloroplast. Its function is as follows. With S4 and S5 plays an important role in translational accuracy. Located at the interface of the 30S and 50S subunits. The polypeptide is Small ribosomal subunit protein uS12c (rps12) (Oenothera elata subsp. hookeri (Hooker's evening primrose)).